The primary structure comprises 368 residues: Protein RecA (368 aa).

Residue 72–79 (GNESSGKT) coordinates ATP.

This sequence belongs to the RecA family.

The protein localises to the cytoplasm. Can catalyze the hydrolysis of ATP in the presence of single-stranded DNA, the ATP-dependent uptake of single-stranded DNA by duplex DNA, and the ATP-dependent hybridization of homologous single-stranded DNAs. It interacts with LexA causing its activation and leading to its autocatalytic cleavage. The protein is Protein RecA of Petrotoga mobilis (strain DSM 10674 / SJ95).